The primary structure comprises 130 residues: MKYFTIFFIFFSLCMFGHVSGAGIRIVNELKNKKTLWMRCYSKNDVLGPTIIPNGGQFTDYFFHNLFGTTRFMCTLKQGPGFSHSQSFRAFKNSGLWDWRAREDGIYLRRIYKTKFDDDTDNLHKEQSWI.

Residues 1 to 21 (MKYFTIFFIFFSLCMFGHVSG) form the signal peptide.

This sequence belongs to the plant self-incompatibility (S1) protein family.

It localises to the secreted. The chain is S-protein homolog 22 from Arabidopsis thaliana (Mouse-ear cress).